Consider the following 213-residue polypeptide: N-(5'-phosphoribosyl)anthranilate isomerase (213 aa).

This sequence belongs to the TrpF family.

It catalyses the reaction N-(5-phospho-beta-D-ribosyl)anthranilate = 1-(2-carboxyphenylamino)-1-deoxy-D-ribulose 5-phosphate. It functions in the pathway amino-acid biosynthesis; L-tryptophan biosynthesis; L-tryptophan from chorismate: step 3/5. The chain is N-(5'-phosphoribosyl)anthranilate isomerase from Caulobacter sp. (strain K31).